We begin with the raw amino-acid sequence, 491 residues long: Putative F-box/LRR-repeat protein At3g59230 (491 aa).

The F-box domain maps to 11 to 57; sequence KDIINSLPEALIYHILSFLSTKEAAITSLLSRKWRYFFAFVPNLDFD. LRR repeat units lie at residues 127–154, 156–182, 184–209, 325–351, 352–377, 419–444, and 472–491; these read LSIA…RIEA, NGLA…YLDS, ELDY…VMID, ASTV…TIES, NTKV…VFQG, NDKT…NIYY, and VQVI…SSSI.

This is Putative F-box/LRR-repeat protein At3g59230 from Arabidopsis thaliana (Mouse-ear cress).